Reading from the N-terminus, the 209-residue chain is CASP-like protein 1B1 (209 aa).

The segment covering 1 to 10 (MDLERGDKKP) has biased composition (basic and acidic residues). A disordered region spans residues 1 to 39 (MDLERGDKKPPPPPPPAPRTAAATTTTTTTPACSGKKRP). Residues 1 to 49 (MDLERGDKKPPPPPPPAPRTAAATTTTTTTPACSGKKRPPLRDSLVALQ) lie on the Cytoplasmic side of the membrane. Positions 19 to 32 (RTAAATTTTTTTPA) are enriched in low complexity. Residues 50–70 (PVLLRAAAALAAAAAAAVMAL) form a helical membrane-spanning segment. The Extracellular portion of the chain corresponds to 71-100 (DAQSYTAVVAIVGTRPLTQTFTAKFSDTPA). Residues 101–121 (FVYFVIANAIAAAYNLLVLLV) traverse the membrane as a helical segment. The Cytoplasmic segment spans residues 122 to 134 (RRRRRTTAGLVVR). A helical transmembrane segment spans residues 135–155 (MLDMVVMALLATGAAAAASMA). At 156–180 (ELGRNGNARARWNPVCDRFGSFCRR) the chain is on the extracellular side. Residues 181–201 (GGAALAASFVGVALMLALNLL) form a helical membrane-spanning segment. Over 202–209 (SAASGAGC) the chain is Cytoplasmic.

The protein belongs to the Casparian strip membrane proteins (CASP) family. Homodimer and heterodimers.

It is found in the cell membrane. The polypeptide is CASP-like protein 1B1 (Zea mays (Maize)).